Here is a 201-residue protein sequence, read N- to C-terminus: Recombination protein RecR (201 aa).

A C4-type zinc finger spans residues 59 to 74 (CSRCQNFCEAELCSIC). A Toprim domain is found at 82–177 (RVLCVVESPT…PVSRIAHGIP (96 aa)).

It belongs to the RecR family.

Functionally, may play a role in DNA repair. It seems to be involved in an RecBC-independent recombinational process of DNA repair. It may act with RecF and RecO. The chain is Recombination protein RecR from Hahella chejuensis (strain KCTC 2396).